A 258-amino-acid chain; its full sequence is tRNA pseudouridine synthase A (258 aa).

The active-site Nucleophile is the aspartate 52. Tyrosine 110 is a binding site for substrate.

The protein belongs to the tRNA pseudouridine synthase TruA family. As to quaternary structure, homodimer.

It carries out the reaction uridine(38/39/40) in tRNA = pseudouridine(38/39/40) in tRNA. In terms of biological role, formation of pseudouridine at positions 38, 39 and 40 in the anticodon stem and loop of transfer RNAs. The chain is tRNA pseudouridine synthase A from Francisella tularensis subsp. tularensis (strain FSC 198).